A 139-amino-acid chain; its full sequence is MLQPKRTKYRKQQKGRMKGLSQRGHRLSNGTFGIKSMDSSFVTARQIEAARIAATRYMKREGSIWIKIFPDKPITKKPLEVRMGKGKGAVEYWAAVVKPGRIMFEIGGVPMDVAKEALRLAAQKLPVRTKFVVARDYQE.

Positions 1–17 (MLQPKRTKYRKQQKGRM) are enriched in basic residues. A disordered region spans residues 1 to 25 (MLQPKRTKYRKQQKGRMKGLSQRGH).

It belongs to the universal ribosomal protein uL16 family. In terms of assembly, part of the 50S ribosomal subunit.

Functionally, binds 23S rRNA and is also seen to make contacts with the A and possibly P site tRNAs. This is Large ribosomal subunit protein uL16 from Christiangramia forsetii (strain DSM 17595 / CGMCC 1.15422 / KT0803) (Gramella forsetii).